The following is a 177-amino-acid chain: Large ribosomal subunit protein uL6 (177 aa).

The protein belongs to the universal ribosomal protein uL6 family. In terms of assembly, part of the 50S ribosomal subunit.

Functionally, this protein binds to the 23S rRNA, and is important in its secondary structure. It is located near the subunit interface in the base of the L7/L12 stalk, and near the tRNA binding site of the peptidyltransferase center. This chain is Large ribosomal subunit protein uL6, found in Rhizobium etli (strain ATCC 51251 / DSM 11541 / JCM 21823 / NBRC 15573 / CFN 42).